The sequence spans 119 residues: Large ribosomal subunit protein bL20 (119 aa).

Belongs to the bacterial ribosomal protein bL20 family.

Functionally, binds directly to 23S ribosomal RNA and is necessary for the in vitro assembly process of the 50S ribosomal subunit. It is not involved in the protein synthesizing functions of that subunit. The protein is Large ribosomal subunit protein bL20 of Bradyrhizobium sp. (strain ORS 278).